Here is a 505-residue protein sequence, read N- to C-terminus: ATP synthase subunit alpha (505 aa).

170–177 (GDRQTGKS) contributes to the ATP binding site.

The protein belongs to the ATPase alpha/beta chains family. In terms of assembly, F-type ATPases have 2 components, CF(1) - the catalytic core - and CF(0) - the membrane proton channel. CF(1) has five subunits: alpha(3), beta(3), gamma(1), delta(1), epsilon(1). CF(0) has four main subunits: a(1), b(1), b'(1) and c(9-12).

It localises to the cellular thylakoid membrane. The catalysed reaction is ATP + H2O + 4 H(+)(in) = ADP + phosphate + 5 H(+)(out). Produces ATP from ADP in the presence of a proton gradient across the membrane. The alpha chain is a regulatory subunit. This Prochlorococcus marinus (strain MIT 9215) protein is ATP synthase subunit alpha.